Consider the following 158-residue polypeptide: Transcription elongation factor GreA (158 aa).

Residues 53–73 adopt a coiled-coil conformation; sequence EQQGFIEGRIKEIEAKLSNAQ.

It belongs to the GreA/GreB family.

In terms of biological role, necessary for efficient RNA polymerase transcription elongation past template-encoded arresting sites. The arresting sites in DNA have the property of trapping a certain fraction of elongating RNA polymerases that pass through, resulting in locked ternary complexes. Cleavage of the nascent transcript by cleavage factors such as GreA or GreB allows the resumption of elongation from the new 3'terminus. GreA releases sequences of 2 to 3 nucleotides. This chain is Transcription elongation factor GreA, found in Thioalkalivibrio sulfidiphilus (strain HL-EbGR7).